Consider the following 268-residue polypeptide: Glucosamine-6-phosphate deaminase (268 aa).

Residue Asp-67 is the Proton acceptor; for enolization step of the active site. Asn-137 serves as the catalytic For ring-opening step. His-139 serves as the catalytic Proton acceptor; for ring-opening step. Glu-144 functions as the For ring-opening step in the catalytic mechanism.

Belongs to the glucosamine/galactosamine-6-phosphate isomerase family. NagB subfamily. In terms of assembly, homohexamer.

The catalysed reaction is alpha-D-glucosamine 6-phosphate + H2O = beta-D-fructose 6-phosphate + NH4(+). Its pathway is amino-sugar metabolism; N-acetylneuraminate degradation; D-fructose 6-phosphate from N-acetylneuraminate: step 5/5. Its function is as follows. Catalyzes the reversible isomerization-deamination of glucosamine 6-phosphate (GlcN6P) to form fructose 6-phosphate (Fru6P) and ammonium ion. The protein is Glucosamine-6-phosphate deaminase of Colwellia psychrerythraea (strain 34H / ATCC BAA-681) (Vibrio psychroerythus).